The sequence spans 374 residues: Glycerophosphodiester phosphodiesterase GDPD2 (374 aa).

The 289-residue stretch at 38 to 326 (FSVIGHRGIG…DFVEEIIEST (289 aa)) folds into the GP-PDE domain. Residues 330–349 (MIRPPPSSSPLPSPSKDDDV) form a disordered region. Residues 332–342 (RPPPSSSPLPS) show a composition bias toward pro residues.

Belongs to the glycerophosphoryl diester phosphodiesterase family. Expressed in roots, shoots, flowers and siliques.

It catalyses the reaction a sn-glycero-3-phosphodiester + H2O = an alcohol + sn-glycerol 3-phosphate + H(+). The chain is Glycerophosphodiester phosphodiesterase GDPD2 from Arabidopsis thaliana (Mouse-ear cress).